Here is a 263-residue protein sequence, read N- to C-terminus: L-histidine 2-aminobutanoyltransferase (263 aa).

This sequence belongs to the methyltransferase superfamily. CntL family. Interacts with CntM.

The enzyme catalyses L-histidine + S-adenosyl-L-methionine = (2S)-2-amino-4-{[(1S)-1-carboxy-2-(1H-imidazol-4-yl)ethyl]amino}butanoate + S-methyl-5'-thioadenosine + H(+). Functionally, catalyzes the nucleophilic attack of one alpha-aminobutanoate moiety from SAM onto L-histidine to produce the intermediate (2S)-2-amino-4-{[(1S)-1-carboxy-2-(1H-imidazol-4-yl)ethyl]amino}butanoate. Functions in the biosynthesis of the metallophore pseudopaline, which is involved in the acquisition of nickel and zinc, and thus enables bacterial growth inside the host, where metal access is limited. Therefore, this enzyme probably contributes to Pseudomonas virulence. Cannot use D-histidine in place of L-histidine as substrate. The polypeptide is L-histidine 2-aminobutanoyltransferase (Pseudomonas aeruginosa (strain UCBPP-PA14)).